A 789-amino-acid polypeptide reads, in one-letter code: Kin of IRRE-like protein 1 (789 aa).

The signal sequence occupies residues 1–47 (MTLENRSTCLMTCQSSLLPKKPRFLSQKMWAPHLVVAYLIFVTLALA). Residues Asn-5, Asn-78, and Asn-172 are each glycosylated (N-linked (GlcNAc...) asparagine). Residues 48–531 (LPGTQTRFSQ…REVLPVGIIA (484 aa)) are Extracellular-facing. Ig-like C2-type domains are found at residues 49–147 (PGTQ…AKLT), 152–248 (PEDT…TSIE), 255–335 (PTVT…TLVN), 340–419 (PRIV…EVPL), and 424–520 (PPII…IQLE). Residues Cys-74 and Cys-132 are joined by a disulfide bond. 2 disulfides stabilise this stretch: Cys-175–Cys-232 and Cys-276–Cys-319. Asn-329 is a glycosylation site (N-linked (GlcNAc...) asparagine). Cys-361 and Cys-403 are joined by a disulfide. The Cell attachment site motif lies at 437 to 439 (RGD). Cys-445 and Cys-504 are disulfide-bonded. A glycan (N-linked (GlcNAc...) asparagine) is linked at Asn-503. A helical membrane pass occupies residues 532-552 (GATIGAGILLVFSFAALVFFL). At 553–789 (YRRRKGSRKD…RFQQRMQTHV (237 aa)) the chain is on the cytoplasmic side. Position 606 is a phosphoserine (Ser-606). 2 positions are modified to phosphotyrosine; by FYN: Tyr-637 and Tyr-638. Phosphotyrosine occurs at positions 654 and 657. Residues 687-713 (RAPASDYGTEPTPSGPSAPGGTDTTSQ) are disordered. Over residues 694–712 (GTEPTPSGPSAPGGTDTTS) the composition is skewed to low complexity. Tyr-756 is subject to Phosphotyrosine.

The protein belongs to the immunoglobulin superfamily. Interacts with TJP1/ZO-1 and with NPHS2/podocin (via the C-terminus). Interacts with NPHS1/nephrin (via the Ig-like domains); this interaction is dependent on KIRREL1 glycosylation. Homodimer (via the Ig-like domains). Interacts when tyrosine-phosphorylated with GRB2. In terms of processing, phosphorylation probably regulates the interaction with NPHS2. Phosphorylated at Tyr-637 and Tyr-638 by FYN, leading to GRB2 binding. Post-translationally, N-glycosylated.

It is found in the cell membrane. Required for proper function of the glomerular filtration barrier. It is involved in the maintenance of a stable podocyte architecture with interdigitating foot processes connected by specialized cell-cell junctions, known as the slit diaphragm. It is a signaling protein that needs the presence of TEC kinases to fully trans-activate the transcription factor AP-1. This is Kin of IRRE-like protein 1 (Kirrel1) from Rattus norvegicus (Rat).